The following is a 240-amino-acid chain: 1-(5-phosphoribosyl)-5-[(5-phosphoribosylamino)methylideneamino] imidazole-4-carboxamide isomerase (240 aa).

Asp-8 functions as the Proton acceptor in the catalytic mechanism. Asp-129 serves as the catalytic Proton donor.

Belongs to the HisA/HisF family.

It localises to the cytoplasm. The catalysed reaction is 1-(5-phospho-beta-D-ribosyl)-5-[(5-phospho-beta-D-ribosylamino)methylideneamino]imidazole-4-carboxamide = 5-[(5-phospho-1-deoxy-D-ribulos-1-ylimino)methylamino]-1-(5-phospho-beta-D-ribosyl)imidazole-4-carboxamide. It functions in the pathway amino-acid biosynthesis; L-histidine biosynthesis; L-histidine from 5-phospho-alpha-D-ribose 1-diphosphate: step 4/9. This Clostridium beijerinckii (strain ATCC 51743 / NCIMB 8052) (Clostridium acetobutylicum) protein is 1-(5-phosphoribosyl)-5-[(5-phosphoribosylamino)methylideneamino] imidazole-4-carboxamide isomerase.